A 138-amino-acid polypeptide reads, in one-letter code: Nucleoside diphosphate kinase (138 aa).

Residues lysine 10, phenylalanine 58, arginine 86, threonine 92, arginine 103, and asparagine 113 each contribute to the ATP site. Catalysis depends on histidine 116, which acts as the Pros-phosphohistidine intermediate.

It belongs to the NDK family. Homotetramer. The cofactor is Mg(2+).

Its subcellular location is the cytoplasm. It carries out the reaction a 2'-deoxyribonucleoside 5'-diphosphate + ATP = a 2'-deoxyribonucleoside 5'-triphosphate + ADP. The enzyme catalyses a ribonucleoside 5'-diphosphate + ATP = a ribonucleoside 5'-triphosphate + ADP. Major role in the synthesis of nucleoside triphosphates other than ATP. The ATP gamma phosphate is transferred to the NDP beta phosphate via a ping-pong mechanism, using a phosphorylated active-site intermediate. This Actinobacillus pleuropneumoniae serotype 5b (strain L20) protein is Nucleoside diphosphate kinase.